Here is a 487-residue protein sequence, read N- to C-terminus: UPF0276 protein SAV_2218 (487 aa).

The tract at residues 1 to 285 (MVEEGTMERL…LGAIRKTLEK (285 aa)) is UPF0276. The unknown stretch occupies residues 286–487 (AGTRAGASAG…RATRRVLLRR (202 aa)). The interval 319 to 348 (AGPRRGGADAQAAPRAAGTEALSAASTSTP) is disordered. Residues 326–348 (ADAQAAPRAAGTEALSAASTSTP) show a composition bias toward low complexity.

It in the N-terminal section; belongs to the UPF0276 family.

This is UPF0276 protein SAV_2218 from Streptomyces avermitilis (strain ATCC 31267 / DSM 46492 / JCM 5070 / NBRC 14893 / NCIMB 12804 / NRRL 8165 / MA-4680).